We begin with the raw amino-acid sequence, 273 residues long: DNA repair protein RecO (273 aa).

Residues 250 to 273 (NVGQNPSGKDDLNERRDVDGTGES) form a disordered region. A compositionally biased stretch (basic and acidic residues) spans 257–273 (GKDDLNERRDVDGTGES).

The protein belongs to the RecO family.

In terms of biological role, involved in DNA repair and RecF pathway recombination. The chain is DNA repair protein RecO from Desulfitobacterium hafniense (strain DSM 10664 / DCB-2).